Here is a 215-residue protein sequence, read N- to C-terminus: Pyridoxine/pyridoxamine 5'-phosphate oxidase (215 aa).

Substrate is bound by residues 9-12 (RRDY) and K69. FMN is bound by residues 64 to 69 (RVLLLK), 79 to 80 (FT), K86, and Q108. Residues Y126, R130, and S134 each contribute to the substrate site. FMN is bound by residues 143–144 (QS) and W188. Residue 194-196 (RLH) coordinates substrate. R198 provides a ligand contact to FMN.

Belongs to the pyridoxamine 5'-phosphate oxidase family. Homodimer. FMN is required as a cofactor.

The enzyme catalyses pyridoxamine 5'-phosphate + O2 + H2O = pyridoxal 5'-phosphate + H2O2 + NH4(+). It carries out the reaction pyridoxine 5'-phosphate + O2 = pyridoxal 5'-phosphate + H2O2. The protein operates within cofactor metabolism; pyridoxal 5'-phosphate salvage; pyridoxal 5'-phosphate from pyridoxamine 5'-phosphate: step 1/1. It functions in the pathway cofactor metabolism; pyridoxal 5'-phosphate salvage; pyridoxal 5'-phosphate from pyridoxine 5'-phosphate: step 1/1. Functionally, catalyzes the oxidation of either pyridoxine 5'-phosphate (PNP) or pyridoxamine 5'-phosphate (PMP) into pyridoxal 5'-phosphate (PLP). In Pseudomonas syringae pv. tomato (strain ATCC BAA-871 / DC3000), this protein is Pyridoxine/pyridoxamine 5'-phosphate oxidase.